Here is a 286-residue protein sequence, read N- to C-terminus: Shikimate dehydrogenase (NADP(+)) (286 aa).

Residues 19-21 and threonine 66 each bind shikimate; that span reads SVS. Catalysis depends on lysine 70, which acts as the Proton acceptor. Shikimate-binding residues include asparagine 91 and aspartate 106. Residues 130–134 and alanine 225 each bind NADP(+); that span reads GAGGS. Tyrosine 227 provides a ligand contact to shikimate. Glycine 248 serves as a coordination point for NADP(+).

This sequence belongs to the shikimate dehydrogenase family. In terms of assembly, homodimer.

The enzyme catalyses shikimate + NADP(+) = 3-dehydroshikimate + NADPH + H(+). It participates in metabolic intermediate biosynthesis; chorismate biosynthesis; chorismate from D-erythrose 4-phosphate and phosphoenolpyruvate: step 4/7. Its function is as follows. Involved in the biosynthesis of the chorismate, which leads to the biosynthesis of aromatic amino acids. Catalyzes the reversible NADPH linked reduction of 3-dehydroshikimate (DHSA) to yield shikimate (SA). This is Shikimate dehydrogenase (NADP(+)) from Dehalococcoides mccartyi (strain ATCC BAA-2100 / JCM 16839 / KCTC 5957 / BAV1).